We begin with the raw amino-acid sequence, 77 residues long: Small nuclear ribonucleoprotein G (77 aa).

The region spanning 4 to 76 (AGAPDLKKYL…VIMIETLDKM (73 aa)) is the Sm domain.

This sequence belongs to the snRNP Sm proteins family. Belongs to the 40S cdc5-associated complex (or cwf complex), a spliceosome sub-complex reminiscent of a late-stage spliceosome composed of the U2, U5 and U6 snRNAs and at least brr2, cdc5, cwf2/prp3, cwf3/syf1, cwf4/syf3, cwf5/ecm2, spp42/cwf6, cwf7/spf27, cwf8, cwf9, cwf10, cwf11, cwf12, prp45/cwf13, cwf14, cwf15, cwf16, cwf17, cwf18, cwf19, cwf20, cwf21, cwf22, cwf23, cwf24, cwf25, cwf26, cyp7/cwf27, cwf28, cwf29/ist3, lea1, msl1, prp5/cwf1, prp10, prp12/sap130, prp17, prp22, sap61, sap62, sap114, sap145, slu7, smb1, smd1, smd3, smf1, smg1 and syf2.

The protein resides in the nucleus. It localises to the cytoplasm. In terms of biological role, plays a role in pre-mRNA splicing as a core component of the spliceosomal U1, U2, U4 and U5 small nuclear ribonucleoproteins (snRNPs), the building blocks of the spliceosome. This is Small nuclear ribonucleoprotein G (smg1) from Schizosaccharomyces pombe (strain 972 / ATCC 24843) (Fission yeast).